We begin with the raw amino-acid sequence, 370 residues long: tRNA-specific 2-thiouridylase MnmA (370 aa).

Residues 7-14 (ALSGGVDS) and Met-34 contribute to the ATP site. The segment at 104-106 (NPD) is interaction with target base in tRNA. Cys-109 serves as the catalytic Nucleophile. Cys-109 and Cys-202 form a disulfide bridge. Gly-134 contacts ATP. The segment at 152-154 (KDQ) is interaction with tRNA. The Cysteine persulfide intermediate role is filled by Cys-202. The interval 308–309 (RY) is interaction with tRNA.

Belongs to the MnmA/TRMU family.

The protein localises to the cytoplasm. It catalyses the reaction S-sulfanyl-L-cysteinyl-[protein] + uridine(34) in tRNA + AH2 + ATP = 2-thiouridine(34) in tRNA + L-cysteinyl-[protein] + A + AMP + diphosphate + H(+). In terms of biological role, catalyzes the 2-thiolation of uridine at the wobble position (U34) of tRNA, leading to the formation of s(2)U34. The sequence is that of tRNA-specific 2-thiouridylase MnmA from Mycoplasma mobile (strain ATCC 43663 / 163K / NCTC 11711) (Mesomycoplasma mobile).